Reading from the N-terminus, the 104-residue chain is Large ribosomal subunit protein uL24 (104 aa).

Belongs to the universal ribosomal protein uL24 family. As to quaternary structure, part of the 50S ribosomal subunit.

In terms of biological role, one of two assembly initiator proteins, it binds directly to the 5'-end of the 23S rRNA, where it nucleates assembly of the 50S subunit. Functionally, one of the proteins that surrounds the polypeptide exit tunnel on the outside of the subunit. This Pseudomonas syringae pv. syringae (strain B728a) protein is Large ribosomal subunit protein uL24.